The following is a 260-amino-acid chain: 5'-nucleotidase SurE (260 aa).

4 residues coordinate a divalent metal cation: D8, D9, S39, and N91.

The protein belongs to the SurE nucleotidase family. Requires a divalent metal cation as cofactor.

Its subcellular location is the cytoplasm. It catalyses the reaction a ribonucleoside 5'-phosphate + H2O = a ribonucleoside + phosphate. Nucleotidase that shows phosphatase activity on nucleoside 5'-monophosphates. The polypeptide is 5'-nucleotidase SurE (Acidovorax ebreus (strain TPSY) (Diaphorobacter sp. (strain TPSY))).